We begin with the raw amino-acid sequence, 263 residues long: Hydroxyethylthiazole kinase (263 aa).

Met-45 serves as a coordination point for substrate. The ATP site is built by Arg-121 and Ser-167. Gly-194 is a substrate binding site.

It belongs to the Thz kinase family. Mg(2+) is required as a cofactor.

The catalysed reaction is 5-(2-hydroxyethyl)-4-methylthiazole + ATP = 4-methyl-5-(2-phosphooxyethyl)-thiazole + ADP + H(+). It functions in the pathway cofactor biosynthesis; thiamine diphosphate biosynthesis; 4-methyl-5-(2-phosphoethyl)-thiazole from 5-(2-hydroxyethyl)-4-methylthiazole: step 1/1. Its function is as follows. Catalyzes the phosphorylation of the hydroxyl group of 4-methyl-5-beta-hydroxyethylthiazole (THZ). The chain is Hydroxyethylthiazole kinase from Vibrio campbellii (strain ATCC BAA-1116).